We begin with the raw amino-acid sequence, 379 residues long: ATP-sensitive inward rectifier potassium channel 10 (379 aa).

The Cytoplasmic segment spans residues 1–61 (MTSVAKVYYS…LKDLWTTFID (61 aa)). Arg-36 is a 1,2-dioctanoyl-sn-glycero-3-phospho-(1D-myo-inositol-4,5-bisphosphate) binding site. A helical transmembrane segment spans residues 62 to 88 (MQWRYKLLLFSATFAGTWFLFGVVWYL). Over 89–114 (VAVAHGDLLELGPPANHTPCVVQVHT) the chain is Extracellular. Cys-108 and Cys-140 are disulfide-bonded. The discontinuously helical; Pore-forming intramembrane region spans 115 to 131 (LTGAFLFSLESQTTIGY). A Selectivity filter motif is present at residues 128–133 (TIGYGF). The Extracellular portion of the chain corresponds to 132-140 (GFRYISEEC). The chain crosses the membrane as a helical span at residues 141 to 166 (PLAIVLLIAQLVLTTILEIFITGTFL). The Cytoplasmic segment spans residues 167–379 (AKIARPKKRA…SALSVRISNV (213 aa)). Residues Lys-168, Arg-171, and Lys-173 each coordinate 1,2-dioctanoyl-sn-glycero-3-phospho-(1D-myo-inositol-4,5-bisphosphate). ATP is bound at residue 210-217 (GCQVTGKL).

The protein belongs to the inward rectifier-type potassium channel (TC 1.A.2.1) family. KCNJ10 subfamily. In terms of assembly, homotetramer. In kidney cells, it forms heteromeric channels with Kir5.1/KCNJ16; this interaction is required for KCNJ16 localization to the basolateral membrane. Interacts with MAGI1, alone and possibly as a heteromer with KCNJ16; this interaction may facilitate KCNJ10/KCNJ16 potassium channel expression at the basolateral membrane in kidney cells. Interacts with PATJ. In terms of tissue distribution, predominantly expressed in the brain, including in glial cells of the cerebellum and forebrain. Expressed at lower levels in the kidney, and other peripheral tissues.

The protein localises to the membrane. It is found in the basolateral cell membrane. It catalyses the reaction K(+)(in) = K(+)(out). Its activity is regulated as follows. Channel activity is strongly regulated by variations of cytosolic pH; channels are activated by alkaline and inhibited by acidic pH values. Activated by phosphatidylinositol 4,5 biphosphate (PtdIns(4,5)P2). Inhibited by Ba(2+) and Cs(+). May be responsible for potassium buffering action of glial cells in the brain. Inward rectifier potassium channels are characterized by a greater tendency to allow potassium to flow into the cell rather than out of it. Their voltage dependence is regulated by the concentration of extracellular potassium; as external potassium is raised, the voltage range of the channel opening shifts to more positive voltages. The inward rectification is mainly due to the blockage of outward current by internal magnesium. Can be blocked by extracellular barium and cesium. In the kidney, together with KCNJ16, mediates basolateral K(+) recycling in distal tubules; this process is critical for Na(+) reabsorption at the tubules. This chain is ATP-sensitive inward rectifier potassium channel 10, found in Rattus norvegicus (Rat).